Here is an 85-residue protein sequence, read N- to C-terminus: Metallothionein-like protein 4B (85 aa).

The disordered stretch occupies residues 1–20 (MADTGKGSASASCNDRCGCP).

The protein belongs to the metallothionein superfamily. Type 15 family. Expressed specifically in seeds.

The protein localises to the cytoplasm. It is found in the nucleus. Its subcellular location is the cell membrane. Its function is as follows. Metallothioneins have a high content of cysteine residues that bind various heavy metals. Functions as a metal chelator of copper (Cu) and zinc (Zn). Plays a role in storing and distributing Zn ion in seed. The chain is Metallothionein-like protein 4B (MT4B) from Arabidopsis thaliana (Mouse-ear cress).